The chain runs to 456 residues: Probable galactarate/D-glucarate transporter GudP (456 aa).

The next 10 helical transmembrane spans lie at 11–31 (YLILLMLFLVTTINYADRATI), 51–71 (YIFSAFGWAYVLGQIPGGWLL), 78–96 (KVYAGSIFTWSLFTLLQGY), 102–119 (ISTAVVLLFLLRFMVGLA), 246–266 (IYLGQFCINALTYFFLTWFPV), 280–300 (GIIASLPAICGFLGGVLGGVI), 317–337 (TPIVCGMVLSMSMIICNYVDA), 341–361 (VVCFMALAFFGKAIGALGWAV), 381–401 (FGNLSSISTPIIIGYIIAATG), and 408–428 (SSWVPTHSFAAISYLFIVGEI).

It belongs to the major facilitator superfamily. Phthalate permease family.

Its subcellular location is the cell inner membrane. The enzyme catalyses galactarate(in) + H(+)(in) = galactarate(out) + H(+)(out). It catalyses the reaction D-glucarate(in) + H(+)(in) = D-glucarate(out) + H(+)(out). In terms of biological role, probably involved in the uptake of galactarate and/or D-glucarate. The sequence is that of Probable galactarate/D-glucarate transporter GudP (gudP) from Pseudomonas putida (Arthrobacter siderocapsulatus).